A 199-amino-acid polypeptide reads, in one-letter code: MVLPLLKVGSLLIKSLAKPLSKQIKIRASKSPIFHDRVVRGARLWHKLDLKLTKFNGDTTRKPVDLNVNAAIDLGTEIVSEAFLLSVAIGLLLYETSRSSEKDKKKEEALQNRFKNLEEKLEVQQETINNLTNVIEAIQSSNPNLNIYIDPNQSTKSSIAEYINTHNIKLNSLKNAQTENDYKSISSEGIPNKRISNVN.

Positions 98-141 (RSSEKDKKKEEALQNRFKNLEEKLEVQQETINNLTNVIEAIQSS) form a coiled coil.

This sequence belongs to the OPA3 family.

The polypeptide is OPA3-like protein (Dictyostelium discoideum (Social amoeba)).